A 302-amino-acid chain; its full sequence is Arginase (302 aa).

The Mn(2+) site is built by His-103, Asp-126, His-128, and Asp-130. Substrate contacts are provided by residues 128 to 132 (HGDLN), 139 to 141 (SGN), and Asp-180. Asp-229 and Asp-231 together coordinate Mn(2+). Substrate contacts are provided by Thr-243 and Glu-274.

Belongs to the arginase family. Mn(2+) serves as cofactor.

The catalysed reaction is L-arginine + H2O = urea + L-ornithine. It participates in nitrogen metabolism; urea cycle; L-ornithine and urea from L-arginine: step 1/1. The sequence is that of Arginase (arg) from Staphylococcus aureus (strain COL).